The sequence spans 447 residues: Putative branched-chain amino acid carrier protein SERP0977 (447 aa).

The next 12 membrane-spanning stretches (helical) occupy residues 5–25 (TWII…LIFP), 40–60 (ILAF…VGAL), 74–94 (PRFS…LFAI), 114–134 (GNLA…YLCL), 143–163 (IGSL…IKGF), 193–213 (GYLT…VNAI), 229–249 (IIAG…LGYI), 290–310 (LLGI…IVSV), 317–337 (IIPK…SFIL), 350–370 (VPVL…ILIA), 382–402 (IPLI…QGWI), and 417–437 (LEWF…SYFV).

The protein belongs to the branched chain amino acid transporter family.

The protein resides in the cell membrane. Its function is as follows. Component of the transport system for branched-chain amino acids (leucine, isoleucine and valine), which is coupled to a proton motive force. The sequence is that of Putative branched-chain amino acid carrier protein SERP0977 from Staphylococcus epidermidis (strain ATCC 35984 / DSM 28319 / BCRC 17069 / CCUG 31568 / BM 3577 / RP62A).